Here is an 86-residue protein sequence, read N- to C-terminus: Parvalbumin beta 3 (86 aa).

Ala1 bears the N-acetylalanine mark. The 36-residue stretch at 35 to 70 folds into the EF-hand domain; the sequence is LSPEEVKKFFAIIDQDHSGFIEEEELKLFLQTFSAG. 6 residues coordinate Ca(2+): Asp48, Asp50, Ser52, Phe54, Glu56, and Glu59.

The protein belongs to the parvalbumin family.

Its function is as follows. In muscle, parvalbumin is thought to be involved in relaxation after contraction. It binds two calcium ions. This is Parvalbumin beta 3 from Merluccius hubbsi (Argentine hake).